The primary structure comprises 642 residues: Chaperone protein DnaK (642 aa).

Phosphothreonine; by autocatalysis is present on Thr-200. The span at 608 to 618 shows a compositional bias: low complexity; that stretch reads QAESQAAGEGQ. Positions 608–642 are disordered; the sequence is QAESQAAGEGQPDAGKKDDGNVVDAEFEEVKKDKQ.

Belongs to the heat shock protein 70 family.

In terms of biological role, acts as a chaperone. The sequence is that of Chaperone protein DnaK from Laribacter hongkongensis (strain HLHK9).